Consider the following 820-residue polypeptide: G-type lectin S-receptor-like serine/threonine-protein kinase At1g11280 (820 aa).

The N-terminal stretch at 1–28 (MGIHLGEIGIVLFPWFLWLSLFLSCGYA) is a signal peptide. Residues 29 to 148 (AITISSPLTL…VSENLLWQSF (120 aa)) form the Bulb-type lectin domain. Topologically, residues 29–434 (AITISSPLTL…SELAGSRRTK (406 aa)) are extracellular. Asn-57, Asn-92, Asn-98, Asn-241, and Asn-272 each carry an N-linked (GlcNAc...) asparagine glycan. Residues 283–319 (PANLCDLYGACGPFGLCVTSNPTKCKCMKGFVPKYKE) enclose the EGF-like domain. 2 disulfide bridges follow: Cys-287–Cys-299 and Cys-293–Cys-307. 3 N-linked (GlcNAc...) asparagine glycosylation sites follow: Asn-325, Asn-341, and Asn-384. Residues 338–422 (CQANLSTKTQ…VGGEFLSIRL (85 aa)) enclose the PAN domain. 2 cysteine pairs are disulfide-bonded: Cys-377–Cys-398 and Cys-381–Cys-387. Residues 435–455 (IIVGSISLSIFVILAFGSYKY) traverse the membrane as a helical segment. Topologically, residues 456–820 (WRYRAKQNVG…HVTQTEIYGR (365 aa)) are cytoplasmic. The region spanning 505–792 (FNVSNKLGQG…DLPRPKQPLF (288 aa)) is the Protein kinase domain. Residues 511-519 (LGQGGFGPV) and Lys-533 each bind ATP. Phosphoserine occurs at positions 539 and 554. Residues 594 to 611 (TLKLQIDWPKRFNIIQGV) are caM-binding. Catalysis depends on Asp-630, which acts as the Proton acceptor. Phosphoserine is present on residues Ser-634 and Ser-647. Thr-664 carries the post-translational modification Phosphothreonine. 3 positions are modified to phosphoserine: Ser-707, Ser-708, and Ser-808. Thr-815 carries the post-translational modification Phosphothreonine.

It belongs to the protein kinase superfamily. Ser/Thr protein kinase family.

It localises to the cell membrane. The enzyme catalyses L-seryl-[protein] + ATP = O-phospho-L-seryl-[protein] + ADP + H(+). It catalyses the reaction L-threonyl-[protein] + ATP = O-phospho-L-threonyl-[protein] + ADP + H(+). The polypeptide is G-type lectin S-receptor-like serine/threonine-protein kinase At1g11280 (Arabidopsis thaliana (Mouse-ear cress)).